The chain runs to 446 residues: Exodeoxyribonuclease 7 large subunit (446 aa).

This sequence belongs to the XseA family. Heterooligomer composed of large and small subunits.

It is found in the cytoplasm. It catalyses the reaction Exonucleolytic cleavage in either 5'- to 3'- or 3'- to 5'-direction to yield nucleoside 5'-phosphates.. Bidirectionally degrades single-stranded DNA into large acid-insoluble oligonucleotides, which are then degraded further into small acid-soluble oligonucleotides. This Xanthomonas campestris pv. campestris (strain 8004) protein is Exodeoxyribonuclease 7 large subunit.